The sequence spans 84 residues: Small ribosomal subunit protein uS17 (84 aa).

The protein belongs to the universal ribosomal protein uS17 family. In terms of assembly, part of the 30S ribosomal subunit.

In terms of biological role, one of the primary rRNA binding proteins, it binds specifically to the 5'-end of 16S ribosomal RNA. The polypeptide is Small ribosomal subunit protein uS17 (Vibrio vulnificus (strain CMCP6)).